Consider the following 323-residue polypeptide: GDP-mannose 4,6-dehydratase (323 aa).

NADP(+) is bound by residues 11-14, R36, 59-60, and 81-85; these read TGQD, DM, and LAAQS. T126 is an active-site residue. Catalysis depends on nucleophile residues E128 and Y150. K154, H180, and R185 together coordinate NADP(+).

Belongs to the NAD(P)-dependent epimerase/dehydratase family. GDP-mannose 4,6-dehydratase subfamily. In terms of assembly, homotetramer. The cofactor is NADP(+).

The enzyme catalyses GDP-alpha-D-mannose = GDP-4-dehydro-alpha-D-rhamnose + H2O. The protein operates within bacterial outer membrane biogenesis; lipopolysaccharide biosynthesis. Catalyzes the conversion of GDP-D-mannose to GDP-4-dehydro-6-deoxy-D-mannose. The chain is GDP-mannose 4,6-dehydratase from Pseudomonas aeruginosa (strain ATCC 15692 / DSM 22644 / CIP 104116 / JCM 14847 / LMG 12228 / 1C / PRS 101 / PAO1).